A 243-amino-acid chain; its full sequence is GrpE protein homolog, mitochondrial (243 aa).

The interval Thr-42–Ala-75 is disordered. Over residues Ala-44–Glu-55 the composition is skewed to basic and acidic residues.

Belongs to the GrpE family. Component of the PAM complex, at least composed of mtHsp70, MGE1, TIM44, PAM16, PAM17 and PAM18.

It is found in the mitochondrion matrix. Its function is as follows. Essential component of the PAM complex, a complex required for the translocation of transit peptide-containing proteins from the inner membrane into the mitochondrial matrix in an ATP-dependent manner. Seems to control the nucleotide-dependent binding of SSC1 to substrate proteins. In Debaryomyces hansenii (strain ATCC 36239 / CBS 767 / BCRC 21394 / JCM 1990 / NBRC 0083 / IGC 2968) (Yeast), this protein is GrpE protein homolog, mitochondrial (mge1).